The primary structure comprises 304 residues: PHO85 cyclin-9 (304 aa).

The Cyclin N-terminal domain occupies 19–146; sequence EMIQFLATST…LLEYLNWDVR (128 aa).

It belongs to the cyclin family. PCL1,2 subfamily. As to quaternary structure, forms a cyclin-CDK complex with PHO85.

Its function is as follows. M/G1-specific cyclin partner of the cyclin-dependent kinase (CDK) PHO85. May have a role in bud site selection in G1 phase. The polypeptide is PHO85 cyclin-9 (PCL9) (Saccharomyces cerevisiae (strain ATCC 204508 / S288c) (Baker's yeast)).